The primary structure comprises 681 residues: PTS system glucose-specific EIICBA component (681 aa).

Residues 3 to 414 enclose the PTS EIIC type-1 domain; the sequence is KKLFGQLQRI…LKYKTPGRED (412 aa). 10 helical membrane-spanning segments follow: residues 16–36, 73–93, 126–146, 170–190, 199–219, 273–293, 303–323, 328–348, 355–375, and 383–403; these read LMLP…GTAM, MIFA…AAIA, ILGI…GALA, FVPI…ALIW, AFST…FGFI, FMQG…LAIY, VVAG…ITEP, FLFV…LSFL, LHLG…GILP, and VIPV…FLIV. The PTS EIIB type-1 domain occupies 425–506; the sequence is TELPYAVLEA…QQIMNGQVVE (82 aa). The active-site Phosphocysteine intermediate; for EIIB activity is cysteine 447. The PTS EIIA type-1 domain maps to 551–655; sequence DQVFSEKMMG…SDITPIIVTQ (105 aa). The active-site Tele-phosphohistidine intermediate; for EIIA activity is the histidine 603.

The protein localises to the cell membrane. It catalyses the reaction N(pros)-phospho-L-histidyl-[protein] + D-glucose(out) = D-glucose 6-phosphate(in) + L-histidyl-[protein]. Functionally, the phosphoenolpyruvate-dependent sugar phosphotransferase system (sugar PTS), a major carbohydrate active transport system, catalyzes the phosphorylation of incoming sugar substrates concomitantly with their translocation across the cell membrane. This system is involved in glucose transport. This Staphylococcus aureus (strain MRSA252) protein is PTS system glucose-specific EIICBA component (ptsG).